Reading from the N-terminus, the 468-residue chain is MSQGKIVQIIGAVVDVEFPRNEVPKVYHALKVDGTEITLEVQQQLGDGVVRTIALGSTDGLKRNLVATNTERAISVPVGAGTLGRIMDVLGRPIDEAGDVQASDHWEIHRGAPSYEDQSSSTELLETGIKVIDLMCPFAKGGKVGLFGGAGVGKTVNMMELINNIAKAHSGLSVFAGVGERTREGNDFYHEMKDSNVLDKVAMVYGQMNEPPGNRLRVALTGLTMAEYFRDEKDASGKGKDVLLFVDNIYRYTLAGTEVSALLGRMPSAVGYQPTLAEEMGVLQERITSTKSGSITSIQAVYVPADDLTDPSPATTFAHLDSTVTLSRNIASLGIYPAVDPLDSTSRQMDPLVIGHEHYDTAQRVQQTLQKYKELKDIIAILGMDELSEEDKQSVSRARKIERFFSQPFHVAEVFTGSPGKYVSLKDTIRGFKAICDGEYDHLPEQAFYMVGSIEEAVEKANKMSAKA.

148 to 155 (GGAGVGKT) contributes to the ATP binding site.

This sequence belongs to the ATPase alpha/beta chains family. F-type ATPases have 2 components, CF(1) - the catalytic core - and CF(0) - the membrane proton channel. CF(1) has five subunits: alpha(3), beta(3), gamma(1), delta(1), epsilon(1). CF(0) has three main subunits: a(1), b(2) and c(9-12). The alpha and beta chains form an alternating ring which encloses part of the gamma chain. CF(1) is attached to CF(0) by a central stalk formed by the gamma and epsilon chains, while a peripheral stalk is formed by the delta and b chains.

It is found in the cell inner membrane. The enzyme catalyses ATP + H2O + 4 H(+)(in) = ADP + phosphate + 5 H(+)(out). Its function is as follows. Produces ATP from ADP in the presence of a proton gradient across the membrane. The catalytic sites are hosted primarily by the beta subunits. This is ATP synthase subunit beta from Xanthomonas axonopodis pv. citri (strain 306).